The sequence spans 185 residues: uncharacterized protein (185 aa).

It belongs to the PIGL family.

This is an uncharacterized protein from Escherichia coli (strain K12).